The chain runs to 389 residues: MKIYQDIYPISKPSQIFAILPFYSGDVDDGFRFGGLGRWYGRLVALIILIGSLTLGEDVLFASKEYRLVASAQGDTEEINRTIETLLCIISYTMVVLSSVQNASRHFRTLHDIAKIDEYLLANGFRETYSCRNLTILVTSAAGGVLAVAFYYIHYRSGIGAKRQIILLLIYFLQLLYSTLLALYLRTLMMNLAQRIGFLNQKLDTFNLQDCGHMENWRELSNLIEVLCKFRYITENINCVAGVSLLFYFGFSFYTVTNQSYLAFATLTAGSLSSKTEVADTIGLSCIWVLAETITMIVICSACDGLASEVNGTAQILARIYGKSKQFQNLIDKFLTKSIKQDLQFTAYGFFSIDNSTLFKIFSAVTTYLVILIQFKQLEDSKVEDISQA.

The Cytoplasmic portion of the chain corresponds to 1–42 (MKIYQDIYPISKPSQIFAILPFYSGDVDDGFRFGGLGRWYGR). A helical membrane pass occupies residues 43-63 (LVALIILIGSLTLGEDVLFAS). At 64–82 (KEYRLVASAQGDTEEINRT) the chain is on the extracellular side. An N-linked (GlcNAc...) asparagine glycan is attached at asparagine 80. The chain crosses the membrane as a helical span at residues 83-103 (IETLLCIISYTMVVLSSVQNA). Over 104–133 (SRHFRTLHDIAKIDEYLLANGFRETYSCRN) the chain is Cytoplasmic. A helical transmembrane segment spans residues 134 to 154 (LTILVTSAAGGVLAVAFYYIH). Residues 155 to 164 (YRSGIGAKRQ) lie on the Extracellular side of the membrane. The helical transmembrane segment at 165 to 185 (IILLLIYFLQLLYSTLLALYL) threads the bilayer. At 186 to 236 (RTLMMNLAQRIGFLNQKLDTFNLQDCGHMENWRELSNLIEVLCKFRYITEN) the chain is on the cytoplasmic side. A helical transmembrane segment spans residues 237–257 (INCVAGVSLLFYFGFSFYTVT). An N-linked (GlcNAc...) asparagine glycan is attached at asparagine 258. The Extracellular portion of the chain corresponds to 258–281 (NQSYLAFATLTAGSLSSKTEVADT). The chain crosses the membrane as a helical span at residues 282 to 302 (IGLSCIWVLAETITMIVICSA). Topologically, residues 303 to 352 (CDGLASEVNGTAQILARIYGKSKQFQNLIDKFLTKSIKQDLQFTAYGFFS) are cytoplasmic. A helical transmembrane segment spans residues 353–373 (IDNSTLFKIFSAVTTYLVILI). Residues 374-389 (QFKQLEDSKVEDISQA) lie on the Extracellular side of the membrane.

Belongs to the insect chemoreceptor superfamily. Gustatory receptor (GR) family. Gr21a subfamily. As to expression, expressed in chemosensory neurons of about 20 male-specific gustatory bristles in the forelegs. No expression is seen in the mechanosensory neurons. In larvae, expressed in the ventral pharyngeal sense organ.

It localises to the cell membrane. Its function is as follows. Dsx-dependent essential component of pheromone-driven courtship behavior. Recognizes a female pheromone involved in the second step (tapping step) of the courtship display which is essential for efficient execution of the entire courtship sequence and timely mating. Required for detection of the male sex pheromone CH503 which is transferred from males to females during mating and inhibits courtship behavior by other males. Gr68a-expressing neurons in the male foreleg relay signals to the suboesophageal zone (SEZ) and courtship suppression is mediated by the release of the neuropeptide tachykinin from a cluster of 8-10 neurons in the SEZ. In Drosophila melanogaster (Fruit fly), this protein is Gustatory receptor 68a (Gr68a).